We begin with the raw amino-acid sequence, 1091 residues long: Voltage-dependent calcium channel subunit alpha-2/delta-3 (1091 aa).

An N-terminal signal peptide occupies residues 1–28; the sequence is MAGPGSPRRASRGASALLAAALLYAALG. The Extracellular portion of the chain corresponds to 29–1068; it reads DVVRSEQQIP…HPEENARECG (1040 aa). An N-linked (GlcNAc...) asparagine glycan is attached at asparagine 166. One can recognise a VWFA domain in the interval 256 to 438; it reads DVVILVDVSG…ENVMEYLHVL (183 aa). Aspartate 262, serine 264, and serine 266 together coordinate a divalent metal cation. The short motif at 262–266 is the MIDAS-like motif element; the sequence is DVSGS. Residue asparagine 309 is glycosylated (N-linked (GlcNAc...) asparagine). Cysteine 412 and cysteine 1055 form a disulfide bridge. Residues 452-549 form the Cache domain; it reads WTEAYIDSTL…RLLYEEGKKR (98 aa). N-linked (GlcNAc...) asparagine glycans are attached at residues asparagine 553, asparagine 632, and asparagine 793. Tyrosine 924 carries the phosphotyrosine modification. A helical transmembrane segment spans residues 1069–1089; that stretch reads GAPSLQAQTVLLLLPLLLMLF. The Cytoplasmic segment spans residues 1090-1091; the sequence is SR.

This sequence belongs to the calcium channel subunit alpha-2/delta family. In terms of assembly, dimer formed of alpha-2-2 and delta-2 chains; disulfide-linked. Voltage-dependent calcium channels are multisubunit complexes, consisting of alpha-1 (CACNA1), alpha-2 (CACNA2D), beta (CACNB) and delta (CACNA2D) subunits in a 1:1:1:1 ratio. In terms of processing, N-glycosylated. Post-translationally, may be proteolytically processed into subunits alpha-2-3 and delta-3 that are disulfide-linked. It is however unclear whether such cleavage really takes place in vivo and has a functional role. In terms of tissue distribution, only detected in brain. Not present in lung, testis, aorta, spleen, jejunum, ventricular muscle and kidney (at protein level). According to PubMed:11687876, it is brain-specific, while according to PubMed:11245980, it is widely expressed.

It localises to the membrane. Functionally, the alpha-2/delta subunit of voltage-dependent calcium channels regulates calcium current density and activation/inactivation kinetics of the calcium channel. Acts as a regulatory subunit for P/Q-type calcium channel (CACNA1A), N-type (CACNA1B), L-type (CACNA1C OR CACNA1D) but not T-type (CACNA1G). The protein is Voltage-dependent calcium channel subunit alpha-2/delta-3 (CACNA2D3) of Homo sapiens (Human).